Reading from the N-terminus, the 184-residue chain is Ribosome-recycling factor (184 aa).

The protein belongs to the RRF family.

It is found in the cytoplasm. Functionally, responsible for the release of ribosomes from messenger RNA at the termination of protein biosynthesis. May increase the efficiency of translation by recycling ribosomes from one round of translation to another. The protein is Ribosome-recycling factor of Bifidobacterium animalis subsp. lactis (strain AD011).